Reading from the N-terminus, the 678-residue chain is PTS system glucose-specific EIICBA component (678 aa).

The 412-residue stretch at 3 to 414 (KKLFGQLQRI…FKYKTPGRED (412 aa)) folds into the PTS EIIC type-1 domain. 11 helical membrane-spanning segments follow: residues 16-36 (LMLPVAILPAAGLLLAIGTAM), 63-83 (AGGIIFDNLPMIFAMGVAIGL), 89-109 (VAAIAAFVGYLVMNKTMGAFL), 126-146 (VLGIPTLQTGVFGGIIIGALA), 170-190 (FVPIMMATTSFILAFPMAWIW), 211-231 (LAVFLFGFIKRLLIPFGLHHI), 273-293 (FMQGEFPVMMFGLPAAALAIY), 303-323 (VVAGLMGSAALTSFLTGITEP), 329-349 (LFVAPVLFFVHAILDGLSFLI), 355-375 (VHLGYTFSGGFIDYVLLGVLP), and 382-402 (LVIPVGVVYAFIYYFVFRFLI). A PTS EIIB type-1 domain is found at 425 to 506 (SELPFNVLKA…SLIMKGEITK (82 aa)). The active-site Phosphocysteine intermediate; for EIIB activity is cysteine 447. The PTS EIIA type-1 domain maps to 547-651 (DQVFAQKMMG…STVTPLIITN (105 aa)). The Tele-phosphohistidine intermediate; for EIIA activity role is filled by histidine 599.

The protein resides in the cell membrane. It catalyses the reaction N(pros)-phospho-L-histidyl-[protein] + D-glucose(out) = D-glucose 6-phosphate(in) + L-histidyl-[protein]. In terms of biological role, the phosphoenolpyruvate-dependent sugar phosphotransferase system (sugar PTS), a major carbohydrate active transport system, catalyzes the phosphorylation of incoming sugar substrates concomitantly with their translocation across the cell membrane. This system is involved in glucose transport. This Staphylococcus saprophyticus subsp. saprophyticus (strain ATCC 15305 / DSM 20229 / NCIMB 8711 / NCTC 7292 / S-41) protein is PTS system glucose-specific EIICBA component (ptsG).